We begin with the raw amino-acid sequence, 492 residues long: Cytochrome P450 26A1 (492 aa).

Position 437 (cysteine 437) interacts with heme.

It belongs to the cytochrome P450 family. Heme serves as cofactor.

The protein localises to the endoplasmic reticulum membrane. The protein resides in the microsome membrane. It carries out the reaction all-trans-retinoate + reduced [NADPH--hemoprotein reductase] + O2 = all-trans-(4S)-hydroxyretinoate + oxidized [NADPH--hemoprotein reductase] + H2O + H(+). It catalyses the reaction all-trans-(4S)-hydroxyretinoate + reduced [NADPH--hemoprotein reductase] + O2 = all-trans-(4S,16)-dihydroxyretinoate + oxidized [NADPH--hemoprotein reductase] + H2O + H(+). The catalysed reaction is all-trans-retinoate + reduced [NADPH--hemoprotein reductase] + O2 = all-trans-18-hydroxyretinoate + oxidized [NADPH--hemoprotein reductase] + H2O + H(+). Its function is as follows. A cytochrome P450 monooxygenase involved in the metabolism of retinoates (RAs), the active metabolites of vitamin A, and critical signaling molecules in animals. RAs exist as at least four different isomers: all-trans-RA (atRA), 9-cis-RA, 13-cis-RA, and 9,13-dicis-RA, where atRA is considered to be the biologically active isomer, although 9-cis-RA and 13-cis-RA also have activity. Catalyzes the hydroxylation of atRA primarily at C-4 and C-18, thereby contributing to the regulation of atRA homeostasis and signaling. Hydroxylation of atRA limits its biological activity and initiates a degradative process leading to its eventual elimination. Involved in the convertion of atRA to all-trans-4-oxo-RA. Able to metabolize other RAs such as 9-cis, 13-cis and 9,13-di-cis RA. Can oxidize all-trans-13,14-dihydroretinoate (DRA) to metabolites which could include all-trans-4-oxo-DRA, all-trans-4-hydroxy-DRA, all-trans-5,8-epoxy-DRA, and all-trans-18-hydroxy-DRA. May play a role in the oxidative metabolism of xenobiotics such as tazarotenic acid. The sequence is that of Cytochrome P450 26A1 (CYP26A1) from Gallus gallus (Chicken).